Here is a 170-residue protein sequence, read N- to C-terminus: Phosphopantetheine adenylyltransferase (170 aa).

Ser14 is a binding site for substrate. ATP is bound by residues 14-15 and His22; that span reads SF. 3 residues coordinate substrate: Lys46, Leu79, and Arg93. ATP-binding positions include 94-96, Glu104, and 129-135; these read GIR and IAEVSST.

The protein belongs to the bacterial CoaD family. As to quaternary structure, homohexamer. It depends on Mg(2+) as a cofactor.

It localises to the cytoplasm. The enzyme catalyses (R)-4'-phosphopantetheine + ATP + H(+) = 3'-dephospho-CoA + diphosphate. It functions in the pathway cofactor biosynthesis; coenzyme A biosynthesis; CoA from (R)-pantothenate: step 4/5. Functionally, reversibly transfers an adenylyl group from ATP to 4'-phosphopantetheine, yielding dephospho-CoA (dPCoA) and pyrophosphate. The chain is Phosphopantetheine adenylyltransferase from Neisseria meningitidis serogroup C (strain 053442).